The primary structure comprises 34 residues: Protamine-Z1/Z2 (34 aa).

Residues 1–34 (PRRRRRSSRPVRRRRRYRRSTVARRRRRVVRRRR) form a disordered region.

As to expression, testis.

The protein localises to the nucleus. It localises to the chromosome. Functionally, protamines substitute for histones in the chromatin of sperm during the haploid phase of spermatogenesis. They compact sperm DNA into a highly condensed, stable and inactive complex. The polypeptide is Protamine-Z1/Z2 (Thunnus thynnus (Atlantic bluefin tuna)).